The sequence spans 381 residues: Cytochrome b (381 aa).

Transmembrane regions (helical) follow at residues 34-54, 78-99, 114-134, and 179-199; these read FGSL…FLAM, WLIR…YLHI, WNTG…GYVL, and FFTF…VHLL. Heme b is bound by residues His84 and His98. Positions 183 and 197 each coordinate heme b. His202 lines the a ubiquinone pocket. The next 4 helical transmembrane spans lie at 227 to 247, 289 to 309, 321 to 341, and 348 to 368; these read YKDL…TLFS, LGGV…PTLH, LTQI…WIGG, and FIII…LLMP.

Belongs to the cytochrome b family. The cytochrome bc1 complex contains 3 respiratory subunits (MT-CYB, CYC1 and UQCRFS1), 2 core proteins (UQCRC1 and UQCRC2) and probably 6 low-molecular weight proteins. Heme b is required as a cofactor.

It localises to the mitochondrion inner membrane. Component of the ubiquinol-cytochrome c reductase complex (complex III or cytochrome b-c1 complex) that is part of the mitochondrial respiratory chain. The b-c1 complex mediates electron transfer from ubiquinol to cytochrome c. Contributes to the generation of a proton gradient across the mitochondrial membrane that is then used for ATP synthesis. In Chelonia mydas (Green sea-turtle), this protein is Cytochrome b (MT-CYB).